Reading from the N-terminus, the 169-residue chain is UPF0316 protein Dde_2502 (169 aa).

The next 3 membrane-spanning stretches (helical) occupy residues 1-21, 38-58, and 68-88; these read MITA…LCDV, LAFS…SRVI, and LAFA…EGVF.

It belongs to the UPF0316 family.

The protein localises to the cell membrane. The polypeptide is UPF0316 protein Dde_2502 (Oleidesulfovibrio alaskensis (strain ATCC BAA-1058 / DSM 17464 / G20) (Desulfovibrio alaskensis)).